The following is a 166-amino-acid chain: Large ribosomal subunit protein mL49 (166 aa).

Residues 56-78 (RIPDPPKHEHYPTPSGWQPPRDP) are disordered.

Belongs to the mitochondrion-specific ribosomal protein mL49 family. Interacts with OXA1L.

Its subcellular location is the mitochondrion. This chain is Large ribosomal subunit protein mL49 (MRPL49), found in Macaca fascicularis (Crab-eating macaque).